A 167-amino-acid polypeptide reads, in one-letter code: Zymogen granule membrane protein 16 (167 aa).

A signal peptide spans Met-1 to Ala-16. Residues Ser-24–Thr-159 form the Jacalin-type lectin domain.

The protein belongs to the jacalin lectin family. As to expression, expressed in pancreas, colon, duodenum, and much less in stomach.

The protein resides in the secreted. Its subcellular location is the extracellular space. It localises to the extracellular matrix. The protein localises to the zymogen granule lumen. It is found in the golgi apparatus lumen. In terms of biological role, may play a role in protein trafficking. May act as a linker molecule between the submembranous matrix on the luminal side of zymogen granule membrane (ZGM) and aggregated secretory proteins during granule formation in the TGN. This is Zymogen granule membrane protein 16 (Zg16) from Rattus norvegicus (Rat).